We begin with the raw amino-acid sequence, 861 residues long: Glucans biosynthesis glucosyltransferase H (861 aa).

6 consecutive transmembrane segments (helical) span residues 142-162 (FILL…MKGI), 188-208 (VLPY…FCWV), 516-536 (VFLT…FLVL), 573-593 (LFST…MLIW), 600-620 (FGGV…SVLL), and 683-703 (FLWW…VSVI).

Belongs to the glycosyltransferase 2 family. OpgH subfamily.

It localises to the cell inner membrane. The protein operates within glycan metabolism; osmoregulated periplasmic glucan (OPG) biosynthesis. In terms of biological role, involved in the biosynthesis of osmoregulated periplasmic glucans (OPGs). This chain is Glucans biosynthesis glucosyltransferase H, found in Pseudomonas aeruginosa (strain UCBPP-PA14).